We begin with the raw amino-acid sequence, 296 residues long: Triplex capsid protein 2 (296 aa).

The protein belongs to the herpesviridae TRX2 protein family. In terms of assembly, interacts with TRX1 and major capisd protein/MCP.

The protein resides in the virion. It localises to the host nucleus. In terms of biological role, structural component of the T=16 icosahedral capsid. The capsid is composed of pentamers and hexamers of major capsid protein/MCP, which are linked together by heterotrimers called triplexes. These triplexes are formed by a single molecule of triplex protein 1/TRX1 and two copies of triplex protein 2/TRX2. Additionally, TRX1 is required for efficient transport of TRX2 to the nucleus, which is the site of capsid assembly. The protein is Triplex capsid protein 2 of Human herpesvirus 6A (strain Uganda-1102) (HHV-6 variant A).